We begin with the raw amino-acid sequence, 43 residues long: METATILGILIAAAVVGITVLALDTAFGPPAAELSDPFEDHED.

A helical transmembrane segment spans residues 3–23 (TATILGILIAAAVVGITVLAL).

Belongs to the PsbN family.

It is found in the cellular thylakoid membrane. May play a role in photosystem I and II biogenesis. The protein is Protein PsbN 1 of Microcystis aeruginosa (strain NIES-843 / IAM M-2473).